We begin with the raw amino-acid sequence, 369 residues long: DNA replication and repair protein RecF (369 aa).

An ATP-binding site is contributed by 30-37 (GENGQGKT).

It belongs to the RecF family.

It localises to the cytoplasm. Its function is as follows. The RecF protein is involved in DNA metabolism; it is required for DNA replication and normal SOS inducibility. RecF binds preferentially to single-stranded, linear DNA. It also seems to bind ATP. The polypeptide is DNA replication and repair protein RecF (Anaeromyxobacter sp. (strain Fw109-5)).